Here is a 262-residue protein sequence, read N- to C-terminus: Taurine import ATP-binding protein TauB (262 aa).

The 231-residue stretch at 4 to 234 (VDHASVFFAA…RFAETGDARS (231 aa)) folds into the ABC transporter domain. 39-46 (GASGCGKS) contacts ATP.

The protein belongs to the ABC transporter superfamily. Taurine importer (TC 3.A.1.17.1) family. As to quaternary structure, the complex is composed of two ATP-binding proteins (TauB), two transmembrane proteins (TauC) and a solute-binding protein (TauA).

It is found in the cell inner membrane. The catalysed reaction is taurine(out) + ATP + H2O = taurine(in) + ADP + phosphate + H(+). In terms of biological role, part of the ABC transporter complex TauABC involved in taurine import. Responsible for energy coupling to the transport system. The polypeptide is Taurine import ATP-binding protein TauB (Rhizobium johnstonii (strain DSM 114642 / LMG 32736 / 3841) (Rhizobium leguminosarum bv. viciae)).